A 133-amino-acid chain; its full sequence is uncharacterized protein (133 aa).

This is an uncharacterized protein from Escherichia coli O157:H7.